A 69-amino-acid chain; its full sequence is uncharacterized protein (69 aa).

Residues M1–A16 form the signal peptide.

This is an uncharacterized protein from Archaeoglobus fulgidus (strain ATCC 49558 / DSM 4304 / JCM 9628 / NBRC 100126 / VC-16).